A 1038-amino-acid polypeptide reads, in one-letter code: TonB-dependent receptor P39 (1038 aa).

An N-terminal signal peptide occupies residues 1-39 (MFKQKLKMKPKIKRNCTFSGLAFILMLLFSSFTVNNLNA). Positions 120-127 (DEVVVIGY) match the TonB box motif. A TBDR plug domain is found at 131 to 243 (KRADVIGAVG…ANGVVLITTK (113 aa)). The TBDR beta-barrel domain occupies 249–1038 (FPKMTVDYIS…EIVIGLNVEF (790 aa)). Positions 1021–1038 (SLRYPNQTEIVIGLNVEF) match the TonB C-terminal box motif.

The protein belongs to the TonB-dependent receptor family.

It is found in the cell outer membrane. TonB-dependent receptor probably involved in ulvan degradation. Ulvan is the main polysaccharide component of the Ulvales (green seaweed) cell wall. It is composed of disaccharide building blocks comprising 3-sulfated rhamnose (Rha3S) linked to D-glucuronic acid (GlcA), L-iduronic acid (IduA), or D-xylose (Xyl). The TonB-dependent receptor may mediate transport of ulvan oligosaccharides from the surface of the outer membrane to the periplasm for subsequent degradation. In Formosa agariphila (strain DSM 15362 / KCTC 12365 / LMG 23005 / KMM 3901 / M-2Alg 35-1), this protein is TonB-dependent receptor P39.